The chain runs to 190 residues: dTTP/UTP pyrophosphatase (190 aa).

The active-site Proton acceptor is Asp71.

It belongs to the Maf family. YhdE subfamily. Requires a divalent metal cation as cofactor.

It localises to the cytoplasm. It catalyses the reaction dTTP + H2O = dTMP + diphosphate + H(+). It carries out the reaction UTP + H2O = UMP + diphosphate + H(+). Nucleoside triphosphate pyrophosphatase that hydrolyzes dTTP and UTP. May have a dual role in cell division arrest and in preventing the incorporation of modified nucleotides into cellular nucleic acids. The polypeptide is dTTP/UTP pyrophosphatase (Xanthomonas campestris pv. campestris (strain ATCC 33913 / DSM 3586 / NCPPB 528 / LMG 568 / P 25)).